The following is a 323-amino-acid chain: tRNA U34 carboxymethyltransferase (323 aa).

Carboxy-S-adenosyl-L-methionine is bound by residues lysine 91, tryptophan 105, lysine 110, glycine 130, 152–154 (DPT), 181–182 (IE), methionine 196, tyrosine 200, and arginine 315.

The protein belongs to the class I-like SAM-binding methyltransferase superfamily. CmoB family. In terms of assembly, homotetramer.

It catalyses the reaction carboxy-S-adenosyl-L-methionine + 5-hydroxyuridine(34) in tRNA = 5-carboxymethoxyuridine(34) in tRNA + S-adenosyl-L-homocysteine + H(+). Its function is as follows. Catalyzes carboxymethyl transfer from carboxy-S-adenosyl-L-methionine (Cx-SAM) to 5-hydroxyuridine (ho5U) to form 5-carboxymethoxyuridine (cmo5U) at position 34 in tRNAs. This chain is tRNA U34 carboxymethyltransferase, found in Escherichia fergusonii (strain ATCC 35469 / DSM 13698 / CCUG 18766 / IAM 14443 / JCM 21226 / LMG 7866 / NBRC 102419 / NCTC 12128 / CDC 0568-73).